Here is a 602-residue protein sequence, read N- to C-terminus: Potassium-transporting ATPase potassium-binding subunit (602 aa).

10 helical membrane-spanning segments follow: residues 3-23 (ANNL…AVPV), 64-84 (QYAL…YALL), 135-155 (GLTV…LALI), 178-198 (LYVL…QGVI), 282-302 (FSNF…CLVF), 313-333 (VAVL…ETSA), 418-438 (GLYG…LMIG), 456-476 (VSIV…IAVL), 522-542 (WMTA…VLAI), and 565-585 (LFVV…YMPA).

This sequence belongs to the KdpA family. As to quaternary structure, the system is composed of three essential subunits: KdpA, KdpB and KdpC.

It localises to the cell inner membrane. Part of the high-affinity ATP-driven potassium transport (or Kdp) system, which catalyzes the hydrolysis of ATP coupled with the electrogenic transport of potassium into the cytoplasm. This subunit binds the periplasmic potassium ions and delivers the ions to the membrane domain of KdpB through an intramembrane tunnel. This is Potassium-transporting ATPase potassium-binding subunit from Burkholderia pseudomallei (strain K96243).